The chain runs to 347 residues: MSTLLIDLKGQELLAEEAELLAHPLVAGLILFTRNFYDRSQIQALIKDIRRRVKKPLLITVDQEGGRVQRFREGFTQLPAMQSFAAMISDPALQLTTAKEAGWLMAAEMTALDIDLSFAPVLDLGHECKAIGDRSFCEEVEPAVRLASAFIDGMHQAGMATTGKHFPGHGHVLADSHLETPYDERPSAVIFERDIQPFQQLIAQNKLDAVMPAHVIYRHCDSQPASGSKYWLQDILRQKLGFDGTVFSDDLGMKGAGFMGDFVARSEKALSAGCDLLLLCNEPEGVVQVLDNLKLEENPPHFAARQRRLQSLFKKKAFSWNELTKTRRWLENSKKLTALQQSWLDSK.

Substrate is bound by residues Asp-62, Arg-70, Arg-134, and 164–165 (KH). His-177 functions as the Proton donor/acceptor in the catalytic mechanism. Asp-249 (nucleophile) is an active-site residue.

This sequence belongs to the glycosyl hydrolase 3 family. NagZ subfamily.

Its subcellular location is the cytoplasm. It carries out the reaction Hydrolysis of terminal non-reducing N-acetyl-D-hexosamine residues in N-acetyl-beta-D-hexosaminides.. The protein operates within cell wall biogenesis; peptidoglycan recycling. Plays a role in peptidoglycan recycling by cleaving the terminal beta-1,4-linked N-acetylglucosamine (GlcNAc) from peptide-linked peptidoglycan fragments, giving rise to free GlcNAc, anhydro-N-acetylmuramic acid and anhydro-N-acetylmuramic acid-linked peptides. In Mannheimia succiniciproducens (strain KCTC 0769BP / MBEL55E), this protein is Beta-hexosaminidase.